The following is a 332-amino-acid chain: Ribosomal RNA small subunit methyltransferase H (332 aa).

Residues 36-38 (GGY), aspartate 54, phenylalanine 81, aspartate 102, and glutamine 109 contribute to the S-adenosyl-L-methionine site. The disordered stretch occupies residues 284–332 (VTAGQEEVSANPRARSAKLRAAERTAAPATADDGESPGWPSLANVMRGG).

The protein belongs to the methyltransferase superfamily. RsmH family.

The protein localises to the cytoplasm. The catalysed reaction is cytidine(1402) in 16S rRNA + S-adenosyl-L-methionine = N(4)-methylcytidine(1402) in 16S rRNA + S-adenosyl-L-homocysteine + H(+). In terms of biological role, specifically methylates the N4 position of cytidine in position 1402 (C1402) of 16S rRNA. The chain is Ribosomal RNA small subunit methyltransferase H from Nitrobacter hamburgensis (strain DSM 10229 / NCIMB 13809 / X14).